The chain runs to 181 residues: Trafficking protein particle complex subunit 3 homolog (181 aa).

Residue Cys70 is the site of S-palmitoyl cysteine attachment.

The protein belongs to the TRAPP small subunits family. BET3 subfamily. Homodimer. Part of the multisubunit TRAPP (transport protein particle) complex.

Its subcellular location is the golgi apparatus. The protein resides in the cis-Golgi network. It localises to the endoplasmic reticulum. Functionally, may play a role in vesicular transport from endoplasmic reticulum to Golgi. Required for the systemic spread of the RNAi response. In Caenorhabditis elegans, this protein is Trafficking protein particle complex subunit 3 homolog (trpp-3).